Here is a 455-residue protein sequence, read N- to C-terminus: Phosphoglucosamine mutase (455 aa).

Catalysis depends on Ser103, which acts as the Phosphoserine intermediate. Ser103, Asp243, Asp245, and Asp247 together coordinate Mg(2+). Residue Ser103 is modified to Phosphoserine.

Belongs to the phosphohexose mutase family. Mg(2+) serves as cofactor. Post-translationally, activated by phosphorylation.

The enzyme catalyses alpha-D-glucosamine 1-phosphate = D-glucosamine 6-phosphate. Functionally, catalyzes the conversion of glucosamine-6-phosphate to glucosamine-1-phosphate. This chain is Phosphoglucosamine mutase, found in Halorhodospira halophila (strain DSM 244 / SL1) (Ectothiorhodospira halophila (strain DSM 244 / SL1)).